The sequence spans 563 residues: Eukaryotic translation initiation factor 3 subunit D-1 (563 aa).

Positions 98 to 136 (VQKPPHQRGRFRNMRGRGGRGRNPRGGLNNHHHHGMTTL) are disordered. The segment covering 100-120 (KPPHQRGRFRNMRGRGGRGRN) has biased composition (basic residues). An RNA gate region spans residues 291–305 (EFDLLTVNESSVEPP).

This sequence belongs to the eIF-3 subunit D family. Component of the eukaryotic translation initiation factor 3 (eIF-3) complex. The eIF-3 complex interacts with pix.

It localises to the cytoplasm. Its function is as follows. mRNA cap-binding component of the eukaryotic translation initiation factor 3 (eIF-3) complex, which is involved in protein synthesis of a specialized repertoire of mRNAs and, together with other initiation factors, stimulates binding of mRNA and methionyl-tRNAi to the 40S ribosome. The eIF-3 complex specifically targets and initiates translation of a subset of mRNAs involved in cell proliferation. In the eIF-3 complex, eif3d specifically recognizes and binds the 7-methylguanosine cap of a subset of mRNAs. In Drosophila pseudoobscura pseudoobscura (Fruit fly), this protein is Eukaryotic translation initiation factor 3 subunit D-1.